A 208-amino-acid chain; its full sequence is Small ribosomal subunit protein uS4 (208 aa).

The region spanning 98-158 (GRLDNVVYRM…EKSKKQARIK (61 aa)) is the S4 RNA-binding domain.

This sequence belongs to the universal ribosomal protein uS4 family. As to quaternary structure, part of the 30S ribosomal subunit. Contacts protein S5. The interaction surface between S4 and S5 is involved in control of translational fidelity.

One of the primary rRNA binding proteins, it binds directly to 16S rRNA where it nucleates assembly of the body of the 30S subunit. Its function is as follows. With S5 and S12 plays an important role in translational accuracy. The sequence is that of Small ribosomal subunit protein uS4 from Actinobacillus pleuropneumoniae serotype 5b (strain L20).